Here is a 308-residue protein sequence, read N- to C-terminus: Ribosomal RNA small subunit methyltransferase H (308 aa).

Residues 34 to 36 (GGH), Asp54, Phe80, Asp101, and Gln108 contribute to the S-adenosyl-L-methionine site.

The protein belongs to the methyltransferase superfamily. RsmH family.

The protein resides in the cytoplasm. The catalysed reaction is cytidine(1402) in 16S rRNA + S-adenosyl-L-methionine = N(4)-methylcytidine(1402) in 16S rRNA + S-adenosyl-L-homocysteine + H(+). Specifically methylates the N4 position of cytidine in position 1402 (C1402) of 16S rRNA. The chain is Ribosomal RNA small subunit methyltransferase H from Ureaplasma urealyticum serovar 10 (strain ATCC 33699 / Western).